We begin with the raw amino-acid sequence, 478 residues long: Proline--tRNA ligase (478 aa).

This sequence belongs to the class-II aminoacyl-tRNA synthetase family. ProS type 3 subfamily. As to quaternary structure, homodimer.

The protein resides in the cytoplasm. The catalysed reaction is tRNA(Pro) + L-proline + ATP = L-prolyl-tRNA(Pro) + AMP + diphosphate. Its function is as follows. Catalyzes the attachment of proline to tRNA(Pro) in a two-step reaction: proline is first activated by ATP to form Pro-AMP and then transferred to the acceptor end of tRNA(Pro). The protein is Proline--tRNA ligase of Ruminiclostridium cellulolyticum (strain ATCC 35319 / DSM 5812 / JCM 6584 / H10) (Clostridium cellulolyticum).